We begin with the raw amino-acid sequence, 622 residues long: Condensin-2 complex subunit H2 (622 aa).

Phosphothreonine is present on threonine 19. Phosphoserine is present on residues serine 95, serine 199, serine 223, and serine 227. The segment at 207–354 (WNPKEPGRAE…PGQKRKRKGA (148 aa)) is disordered. A compositionally biased stretch (low complexity) spans 262-273 (AAEPPEASAPEV). Position 282 is a phosphoserine (serine 282). A compositionally biased stretch (basic and acidic residues) spans 294–312 (TLRERKEAPEPASRLKDTP).

The protein belongs to the CND2 H2 (condensin-2 subunit 2) family. In terms of assembly, component of the condensin-2 complex, which contains the SMC2 and SMC4 heterodimer, and three non SMC subunits, NCAPG2, NCAPH2 and NCAPD3 that probably regulate the complex.

The protein resides in the nucleus. Functionally, regulatory subunit of the condensin-2 complex, a complex that seems to provide chromosomes with an additional level of organization and rigidity and in establishing mitotic chromosome architecture. May promote the resolution of double-strand DNA catenanes (intertwines) between sister chromatids. Condensin-mediated compaction likely increases tension in catenated sister chromatids, providing directionality for type II topoisomerase-mediated strand exchanges toward chromatid decatenation. Required for decatenation of chromatin bridges at anaphase. Early in neurogenesis, may play an essential role to ensure accurate mitotic chromosome condensation in neuron stem cells, ultimately affecting neuron pool and cortex size. Seems to have lineage-specific role in T-cell development. The polypeptide is Condensin-2 complex subunit H2 (NCAPH2) (Bos taurus (Bovine)).